Consider the following 294-residue polypeptide: Large ribosomal subunit protein uL18A (294 aa).

Phosphoserine is present on Ser10. At Tyr12 the chain carries Phosphotyrosine. A Phosphoserine modification is found at Ser81.

The protein belongs to the universal ribosomal protein uL18 family. Component of the large ribosomal subunit (LSU). Mature yeast ribosomes consist of a small (40S) and a large (60S) subunit. The 40S small subunit contains 1 molecule of ribosomal RNA (18S rRNA) and 33 different proteins (encoded by 57 genes). The large 60S subunit contains 3 rRNA molecules (25S, 5.8S and 5S rRNA) and 46 different proteins (encoded by 81 genes). Component of a hexameric 5S RNP precursor complex, composed of 5S RNA, rrs1, rpf2, rpl5a/rpl5b, rpl11a/rpl11b and syo1; this complex acts as a precursor for ribosome assembly. rpl5a/rpl5b/uL18 forms a heterotrimeric complex with syo1 and rpl11a/rpl11b/uL5. Interaction of this complex with KAP104 allows the nuclear import of the heterotrimer.

It localises to the cytoplasm. Its subcellular location is the nucleus. Component of the ribosome, a large ribonucleoprotein complex responsible for the synthesis of proteins in the cell. The small ribosomal subunit (SSU) binds messenger RNAs (mRNAs) and translates the encoded message by selecting cognate aminoacyl-transfer RNA (tRNA) molecules. The large subunit (LSU) contains the ribosomal catalytic site termed the peptidyl transferase center (PTC), which catalyzes the formation of peptide bonds, thereby polymerizing the amino acids delivered by tRNAs into a polypeptide chain. The nascent polypeptides leave the ribosome through a tunnel in the LSU and interact with protein factors that function in enzymatic processing, targeting, and the membrane insertion of nascent chains at the exit of the ribosomal tunnel. This chain is Large ribosomal subunit protein uL18A (rpl501), found in Schizosaccharomyces pombe (strain 972 / ATCC 24843) (Fission yeast).